Here is a 408-residue protein sequence, read N- to C-terminus: Mitochondrial outer membrane protein SLC25A46 (408 aa).

Disordered regions lie at residues methionine 1–cysteine 23 and histidine 52–glycine 80. Positions leucine 66–glycine 76 are enriched in low complexity. One copy of the Solcar 1 repeat lies at glutamine 86 to proline 177. 6 helical membrane-spanning segments follow: residues phenylalanine 93–leucine 113, phenylalanine 157–proline 177, isoleucine 189–alanine 209, leucine 248–isoleucine 268, phenylalanine 304–leucine 324, and leucine 373–leucine 393. The stretch at aspartate 301 to leucine 403 is one Solcar 2 repeat.

The protein belongs to the mitochondrial carrier (TC 2.A.29) family.

It localises to the mitochondrion outer membrane. Transmembrane protein of the mitochondrial outer membrane that controls mitochondrial organization. May regulate the assembly of the MICOS (mitochondrial contact site and cristae organizing system) complex which is essential to the biogenesis and dynamics of mitochondrial cristae, the inwards folds of the inner mitochondrial membrane. Through its interaction with the EMC (endoplasmic reticulum membrane protein complex), could regulate mitochondrial lipid homeostasis and thereby mitochondrial fission. The chain is Mitochondrial outer membrane protein SLC25A46 from Gallus gallus (Chicken).